The following is a 446-amino-acid chain: WD repeat domain phosphoinositide-interacting protein 1 (446 aa).

The short motif at leucine 131 to leucine 136 is the Nuclear receptor interaction element. A WD 1 repeat occupies alanine 184–glutamate 224. Positions phenylalanine 225–glycine 228 match the L/FRRG motif motif. 2 WD repeats span residues lysine 230 to proline 269 and serine 312 to cysteine 351. The segment at alanine 386–leucine 406 is disordered.

This sequence belongs to the WD repeat PROPPIN family. As to quaternary structure, interacts with androgen receptor (AR) and the estrogen receptors ESR1 and ESR2. Interacts with WIPI2. Interacts with WDR45. Interacts with ATG16L1. May interact with NUDC.

It localises to the golgi apparatus. The protein resides in the trans-Golgi network. Its subcellular location is the endosome. It is found in the cytoplasmic vesicle. The protein localises to the clathrin-coated vesicle. It localises to the preautophagosomal structure membrane. The protein resides in the cytoplasm. Its subcellular location is the cytoskeleton. Component of the autophagy machinery that controls the major intracellular degradation process by which cytoplasmic materials are packaged into autophagosomes and delivered to lysosomes for degradation. Plays an important role in starvation- and calcium-mediated autophagy, as well as in mitophagy. Functions downstream of the ULK1 and PI3-kinases that produce phosphatidylinositol 3-phosphate (PtdIns3P) on membranes of the endoplasmic reticulum once activated. Binds phosphatidylinositol 3-phosphate (PtdIns3P), and maybe other phosphoinositides including PtdIns3,5P2 and PtdIns5P, and is recruited to phagophore assembly sites at the endoplasmic reticulum membranes. There, it assists WIPI2 in the recruitment of ATG12-ATG5-ATG16L1, a complex that directly controls the elongation of the nascent autophagosomal membrane. Together with WDR45/WIPI4, promotes ATG2 (ATG2A or ATG2B)-mediated lipid transfer by enhancing ATG2-association with phosphatidylinositol 3-monophosphate (PI3P)-containing membranes. Involved in xenophagy of Staphylococcus aureus. Invading S.aureus cells become entrapped in autophagosome-like WIPI1 positive vesicles targeted for lysosomal degradation. Also plays a distinct role in controlling the transcription of melanogenic enzymes and melanosome maturation, a process that is distinct from starvation-induced autophagy. May also regulate the trafficking of proteins involved in the mannose-6-phosphate receptor (MPR) recycling pathway. This is WD repeat domain phosphoinositide-interacting protein 1 (Wipi1) from Mus musculus (Mouse).